The following is a 255-amino-acid chain: tRNA (guanine-N(1)-)-methyltransferase (255 aa).

S-adenosyl-L-methionine contacts are provided by residues glycine 119 and 139–144 (IGDFIL).

This sequence belongs to the RNA methyltransferase TrmD family. In terms of assembly, homodimer.

The protein resides in the cytoplasm. It catalyses the reaction guanosine(37) in tRNA + S-adenosyl-L-methionine = N(1)-methylguanosine(37) in tRNA + S-adenosyl-L-homocysteine + H(+). Specifically methylates guanosine-37 in various tRNAs. The chain is tRNA (guanine-N(1)-)-methyltransferase from Pseudoalteromonas translucida (strain TAC 125).